The primary structure comprises 107 residues: Small ribosomal subunit protein uS17 (107 aa).

The protein belongs to the universal ribosomal protein uS17 family. In terms of assembly, part of the 30S ribosomal subunit.

Functionally, one of the primary rRNA binding proteins, it binds specifically to the 5'-end of 16S ribosomal RNA. The chain is Small ribosomal subunit protein uS17 from Thermotoga sp. (strain RQ2).